A 287-amino-acid chain; its full sequence is uncharacterized protein (287 aa).

Positions 1–44 (MAAPRNLTGDGGARQLVKDEESPAASSAAKGLLNDDSPTGKRTK) are disordered. The residue at position 37 (S37) is a Phosphoserine. The next 5 helical transmembrane spans lie at 55–75 (FAVF…IYLT), 124–144 (TFMI…FGVV), 147–167 (FVLV…LSKL), 218–238 (PIVD…LMPA), and 260–280 (DFKT…PALL).

The protein localises to the membrane. This is an uncharacterized protein from Arabidopsis thaliana (Mouse-ear cress).